The sequence spans 315 residues: Transaldolase (315 aa).

Lys-131 acts as the Schiff-base intermediate with substrate in catalysis.

It belongs to the transaldolase family. Type 1 subfamily. As to quaternary structure, homodimer.

It is found in the cytoplasm. It catalyses the reaction D-sedoheptulose 7-phosphate + D-glyceraldehyde 3-phosphate = D-erythrose 4-phosphate + beta-D-fructose 6-phosphate. Its pathway is carbohydrate degradation; pentose phosphate pathway; D-glyceraldehyde 3-phosphate and beta-D-fructose 6-phosphate from D-ribose 5-phosphate and D-xylulose 5-phosphate (non-oxidative stage): step 2/3. Its function is as follows. Transaldolase is important for the balance of metabolites in the pentose-phosphate pathway. In Actinobacillus pleuropneumoniae serotype 5b (strain L20), this protein is Transaldolase.